The chain runs to 1060 residues: Anoctamin-8 (1060 aa).

Residues 1–32 (MAEAASGAGDVTLEGERGKRPPPEGEPAAPAS) form a disordered region. Ala-2 carries the N-acetylalanine modification. Over 2–244 (AEAASGAGDV…DDICDYFGVK (243 aa)) the chain is Cytoplasmic. Over residues 14–23 (EGERGKRPPP) the composition is skewed to basic and acidic residues. The helical transmembrane segment at 245 to 265 (IAMYFAWLGFYTSAMVYPAVF) threads the bilayer. The Extracellular segment spans residues 266 to 281 (GSVLYTFTEADQTSRD). Residues 282-302 (VSCVVFALFNVIWSTLFLEEW) form a helical membrane-spanning segment. Topologically, residues 303–356 (KRRGAELAYKWGTLDSPGEAVEEPRPQFRGIRRISPITRAEEFYYPPWKRLLFQ) are cytoplasmic. The residue at position 318 (Ser-318) is a Phosphoserine. A helical membrane pass occupies residues 357–377 (LLVSLPLCLACLICVFILMLG). The Extracellular segment spans residues 378 to 400 (CFQLQELVLSVKGLPRLVRFLPK). A helical transmembrane segment spans residues 401 to 421 (VMLALLVSVSAEGYKKLAVWL). Residues 422–437 (NDMENYRLESTYERHL) lie on the Cytoplasmic side of the membrane. A helical transmembrane segment spans residues 438 to 458 (IIKVVLFQFVNSYLSLFYIGF). The Extracellular portion of the chain corresponds to 459 to 745 (YLKDMDRLKE…YEDTFQDYQE (287 aa)). 4 disordered regions span residues 529–605 (AQAD…SLLD), 619–640 (GAGR…SPTM), 653–672 (AEED…EPQT), and 680–723 (GEGR…HSPQ). The span at 534-547 (GGAGSRRCLGGGCG) shows a compositional bias: gly residues. 2 stretches are compositionally biased toward acidic residues: residues 549–559 (PEEENEEEEEA) and 581–602 (EEDE…EEGS). At Ser-665 the chain carries Phosphoserine. A compositionally biased stretch (basic and acidic residues) spans 680 to 694 (GEGRDQGPDGDRDTE). N-linked (GlcNAc...) asparagine glycosylation occurs at Asn-708. Residues 746–766 (MFVQFGYVVLFSSAFPLAALC) traverse the membrane as a helical segment. Over 767–802 (ALVNNLIEIRSDAFKLCTGLQRPFGRRVESIGQWQK) the chain is Cytoplasmic. Phosphoserine is present on Ser-796. The chain crosses the membrane as a helical span at residues 803–823 (VMEAMGVLAIVVNCYLIGQCG). The Extracellular portion of the chain corresponds to 824–836 (QLQRLFPWLSPEA). The helical transmembrane segment at 837–857 (AIVSVVVLEHLALLVKYLIHV) threads the bilayer. Residues 858 to 1060 (AIPDIPGWVA…PRPEDAGHRP (203 aa)) are Cytoplasmic-facing. The interval 884-1060 (HERQAQQRFQ…PRPEDAGHRP (177 aa)) is disordered. Composition is skewed to basic and acidic residues over residues 899–927 (RREE…EARA) and 935–950 (VAER…ERPR). Residues 972–986 (TRPPAPTGCAPPPRS) show a composition bias toward pro residues. Arg-991 carries the asymmetric dimethylarginine; alternate modification. An Omega-N-methylarginine; alternate modification is found at Arg-991. Position 999 is an omega-N-methylarginine (Arg-999). Basic and acidic residues predominate over residues 1049–1060 (PEPRPEDAGHRP).

Belongs to the anoctamin family. In terms of tissue distribution, predominant expression seen in epithelial tissues.

Its subcellular location is the cell membrane. Does not exhibit calcium-activated chloride channel (CaCC) activity. The sequence is that of Anoctamin-8 (Ano8) from Mus musculus (Mouse).